Here is a 179-residue protein sequence, read N- to C-terminus: Adenine phosphoribosyltransferase (179 aa).

Belongs to the purine/pyrimidine phosphoribosyltransferase family. Homodimer.

Its subcellular location is the cytoplasm. The enzyme catalyses AMP + diphosphate = 5-phospho-alpha-D-ribose 1-diphosphate + adenine. The protein operates within purine metabolism; AMP biosynthesis via salvage pathway; AMP from adenine: step 1/1. Catalyzes a salvage reaction resulting in the formation of AMP, that is energically less costly than de novo synthesis. The polypeptide is Adenine phosphoribosyltransferase (Gluconobacter oxydans (strain 621H) (Gluconobacter suboxydans)).